The chain runs to 187 residues: Elongation factor P (187 aa).

It belongs to the elongation factor P family.

The protein localises to the cytoplasm. Its pathway is protein biosynthesis; polypeptide chain elongation. Involved in peptide bond synthesis. Stimulates efficient translation and peptide-bond synthesis on native or reconstituted 70S ribosomes in vitro. Probably functions indirectly by altering the affinity of the ribosome for aminoacyl-tRNA, thus increasing their reactivity as acceptors for peptidyl transferase. The polypeptide is Elongation factor P (Treponema denticola (strain ATCC 35405 / DSM 14222 / CIP 103919 / JCM 8153 / KCTC 15104)).